The following is a 125-amino-acid chain: Succinate dehydrogenase assembly factor 3, mitochondrial (125 aa).

Residues 1–30 (MPGRHVSRVRALYKRVLQLHRVLPPDLKSL) constitute a mitochondrion transit peptide.

Belongs to the complex I LYR family. SDHAF3 subfamily. In terms of assembly, interacts with SDHB within an SDHA-SDHB subcomplex.

Its subcellular location is the mitochondrion matrix. Plays an essential role in the assembly of succinate dehydrogenase (SDH), an enzyme complex (also referred to as respiratory complex II) that is a component of both the tricarboxylic acid (TCA) cycle and the mitochondrial electron transport chain, and which couples the oxidation of succinate to fumarate with the reduction of ubiquinone (coenzyme Q) to ubiquinol. Promotes maturation of the iron-sulfur protein subunit SDHB of the SDH catalytic dimer, protecting it from the deleterious effects of oxidants. May act together with SDHAF1. This chain is Succinate dehydrogenase assembly factor 3, mitochondrial, found in Homo sapiens (Human).